Here is a 128-residue protein sequence, read N- to C-terminus: Photosystem II reaction center Psb28 protein (128 aa).

The segment at 109-128 (SGLGYSQDSGEAPASDSSNG) is disordered. The segment covering 111-128 (LGYSQDSGEAPASDSSNG) has biased composition (polar residues).

It belongs to the Psb28 family. As to quaternary structure, part of the photosystem II complex.

Its subcellular location is the cellular thylakoid membrane. The chain is Photosystem II reaction center Psb28 protein from Synechococcus sp. (strain CC9311).